The sequence spans 232 residues: Putative N-acetylmannosamine-6-phosphate 2-epimerase (232 aa).

It belongs to the NanE family.

The catalysed reaction is an N-acyl-D-glucosamine 6-phosphate = an N-acyl-D-mannosamine 6-phosphate. It participates in amino-sugar metabolism; N-acetylneuraminate degradation; D-fructose 6-phosphate from N-acetylneuraminate: step 3/5. Functionally, converts N-acetylmannosamine-6-phosphate (ManNAc-6-P) to N-acetylglucosamine-6-phosphate (GlcNAc-6-P). This Corynebacterium glutamicum (strain R) protein is Putative N-acetylmannosamine-6-phosphate 2-epimerase.